The sequence spans 477 residues: Mitochondrial adenyl nucleotide antiporter SLC25A24 (477 aa).

Residues 1–173 (MLRWLRDFVL…RFWKHSTGID (173 aa)) form a regulatory N-terminal domain region. At 1–197 (MLRWLRDFVL…EKKSGQWWRQ (197 aa)) the chain is on the mitochondrial intermembrane side. EF-hand domains lie at 19–54 (EQPT…LGIP), 55–88 (LGQD…KDHE), 86–121 (DHEK…LGLT), and 122–157 (ISEQ…NPVT). The Ca(2+) site is built by Asp-32, Asn-34, Asp-36, Val-38, Glu-43, Asp-68, Asn-70, Asp-72, Lys-74, Glu-79, Asp-99, Asn-101, Asp-103, Lys-105, Glu-110, Asp-135, Asp-137, Thr-139, Thr-141, and Glu-146. The interval 159–168 (IEEIIRFWKH) is linker region. The segment at 174 to 477 (IGDSLTIPDE…MKQTLGVTQK (304 aa)) is C-terminal transmembrane transporter domain. Solcar repeat units follow at residues 192–278 (GQWW…YKKL), 286–371 (IGTF…LKSY), and 383–471 (PGVM…MKQT). The helical transmembrane segment at 198-215 (LLAGGIAGAVSRTSTAPL) threads the bilayer. Topologically, residues 216-252 (DRLKIMMQVHGSKSDKMNIFGGFRQMVKEGGIRSLWR) are mitochondrial matrix. The chain crosses the membrane as a helical span at residues 253–272 (GNGTNVIKIAPETAVKFWAY). Residues 273 to 295 (EQYKKLLTEEGQKIGTFERFISG) lie on the Mitochondrial intermembrane side of the membrane. The chain crosses the membrane as a helical span at residues 296–309 (SMAGATAQTFIYPM). At 310 to 345 (EVMKTRLAVGKTGQYSGIYDCAKKILKHEGLGAFYK) the chain is on the mitochondrial matrix side. An N6-acetyllysine; alternate modification is found at Lys-320. An N6-succinyllysine; alternate modification is found at Lys-320. Lys-336 carries the post-translational modification N6-acetyllysine. A helical transmembrane segment spans residues 346–365 (GYVPNLLGIIPYAGIDLAVY). The Mitochondrial intermembrane portion of the chain corresponds to 366–388 (ELLKSYWLDNFAKDSVNPGVMVL). Residues 389 to 406 (LGCGALSSTCGQLASYPL) traverse the membrane as a helical segment. Topologically, residues 407–445 (ALVRTRMQAQAMLEGSPQLNMVGLFRRIISKEGIPGLYR) are mitochondrial matrix. At Lys-437 the chain carries N6-acetyllysine; alternate. Lys-437 is modified (N6-succinyllysine; alternate). Residues 446–465 (GITPNFMKVLPAVGISYVVY) form a helical membrane-spanning segment. The Mitochondrial intermembrane segment spans residues 466-477 (ENMKQTLGVTQK).

Belongs to the mitochondrial carrier (TC 2.A.29) family. In terms of assembly, monomer. As to expression, expressed in all tissues tested. Highly expressed in testis, expressed at intermediate level in small intestine and pancreas, and weakly expressed in kidney, spleen, liver, skeletal muscle and heart.

The protein resides in the mitochondrion inner membrane. The enzyme catalyses Mg(2+)(out) + phosphate(in) + ATP(out) = Mg(2+)(in) + phosphate(out) + ATP(in). The catalysed reaction is ADP(out) + phosphate(in) + H(+)(out) = ADP(in) + phosphate(out) + H(+)(in). It carries out the reaction AMP(out) + phosphate(in) = AMP(in) + phosphate(out). It catalyses the reaction phosphate(in) + ATP(out) + 2 H(+)(out) = phosphate(out) + ATP(in) + 2 H(+)(in). The enzyme catalyses dADP(in) + ADP(out) = dADP(out) + ADP(in). The catalysed reaction is Mg(2+)(in) + ADP(out) + ATP(in) + H(+)(out) = Mg(2+)(out) + ADP(in) + ATP(out) + H(+)(in). It carries out the reaction ADP(out) + diphosphate(in) = ADP(in) + diphosphate(out). It catalyses the reaction dAMP(in) + ADP(out) + H(+)(out) = dAMP(out) + ADP(in) + H(+)(in). The enzyme catalyses 3'-AMP(in) + ADP(out) + H(+)(out) = 3'-AMP(out) + ADP(in) + H(+)(in). The catalysed reaction is dAMP(out) + phosphate(in) = dAMP(in) + phosphate(out). It carries out the reaction 3'-AMP(out) + phosphate(in) = 3'-AMP(in) + phosphate(out). It catalyses the reaction dADP(out) + phosphate(in) + H(+)(out) = dADP(in) + phosphate(out) + H(+)(in). Activated by an increase in cytosolic calcium levels that induce a conformational change of the N-terminal regulatory domain, uncapping the channel and allowing transport. Inhibited by bathophenanthroline, mersalyl, p-hydroxymercuribenzoate, bromcresol purple and tannic acid. Its function is as follows. Electroneutral antiporter that mediates the transport of adenyl nucleotides through the inner mitochondrial membrane. Originally identified as an ATP-magnesium/inorganic phosphate antiporter, it also acts as a broad specificity adenyl nucleotide antiporter. By regulating the mitochondrial matrix adenyl nucleotide pool could adapt to changing cellular energetic demands and indirectly regulate adenyl nucleotide-dependent metabolic pathways. In vitro, a low activity is also observed with guanyl and pyrimidine nucleotides. May play a role in protecting cells against oxidative stress-induced cell death, by buffering calcium levels in the mitochondrial matrix through the formation of calcium-phosphate precipitates. This Homo sapiens (Human) protein is Mitochondrial adenyl nucleotide antiporter SLC25A24.